A 511-amino-acid chain; its full sequence is Cytochrome P450 4A7 (511 aa).

A propeptide spanning residues 1-4 (MSVS) is cleaved from the precursor. Heme is bound by residues Glu-322 and Cys-458.

The protein belongs to the cytochrome P450 family. Heme serves as cofactor. Liver, kidney, small intestine.

It is found in the endoplasmic reticulum membrane. Its subcellular location is the microsome membrane. The enzyme catalyses an omega-methyl-long-chain fatty acid + reduced [NADPH--hemoprotein reductase] + O2 = an omega-hydroxy-long-chain fatty acid + oxidized [NADPH--hemoprotein reductase] + H2O + H(+). Its function is as follows. Cytochromes P450 are a group of heme-thiolate monooxygenases. In liver microsomes, this enzyme is involved in an NADPH-dependent electron transport pathway. It oxidizes a variety of structurally unrelated compounds, including steroids, fatty acids, and xenobiotics. Functionally, the kidney P-450 system is rather specialized for the omega-hydroxylation of fatty acids. Both P450-KA1 and P450-KA2 catalyze the omega- and (omega-1)-hydroxylation of various fatty acids with no drug-metabolizing activity, and hydroxylate prostaglandin A1 and A2 solely at the omega-position. This chain is Cytochrome P450 4A7 (CYP4A7), found in Oryctolagus cuniculus (Rabbit).